A 396-amino-acid chain; its full sequence is MTCSLLPSEQSSGASFLPKSNASFPWGSLDEDELDDSLLEFSDGEEDDGHFSFTEEEIEMLLKDDDGGHNEYRPRKSQILPDIPQENSLYSLGPAAETPGFLKLPQLSTSVGHGPTPSKSLNRHFVLEKNLIKVTVVAPFNPTVCDPVLDKDKIDSSKETENPASLREQTREDDPQPNESKRCTEPEGVSPNTSAWDGPLLSSPSNNNIEQTASDKNIPESKKPTPVFSQISNHSEVPNRKNSGSHKSGCEVRIPVVSSSSNRHAFDKDSGEAKGERRLGKVIPVLQTRTRMFSQSELEKQKDIYLSKVIAHIEDPGDSNQGTLGELDALMDQVHMQHPDWQHPSDLTTRNYARFRQRPLQRYSLSQWVDRNKRSHHRFQRLPDFSYSPYVSSHQQ.

The tract at residues 145–249 is disordered; that stretch reads CDPVLDKDKI…RKNSGSHKSG (105 aa). 2 stretches are compositionally biased toward basic and acidic residues: residues 148 to 161 and 168 to 185; these read VLDK…KETE and EQTR…RCTE. 2 stretches are compositionally biased toward polar residues: residues 202 to 215 and 227 to 246; these read SSPS…TASD and VFSQ…SGSH.

As to quaternary structure, interacts with S100P.

It is found in the nucleus. This is S100P-binding protein from Mus musculus (Mouse).